Here is a 79-residue protein sequence, read N- to C-terminus: Putative membrane protein insertion efficiency factor (79 aa).

The protein belongs to the UPF0161 family.

It localises to the cell inner membrane. Its function is as follows. Could be involved in insertion of integral membrane proteins into the membrane. The protein is Putative membrane protein insertion efficiency factor of Rippkaea orientalis (strain PCC 8801 / RF-1) (Cyanothece sp. (strain PCC 8801)).